A 156-amino-acid polypeptide reads, in one-letter code: Probable succinate transporter subunit YjjB (156 aa).

4 consecutive transmembrane segments (helical) span residues 7–27 (WALL…AMVF), 54–74 (FGMD…MIGI), 86–106 (VFTV…TAMI), and 128–148 (FLKA…PGLW).

This sequence belongs to the ThrE exporter (TC 2.A.79) family. The transporter is composed of YjjB and YjjP.

The protein resides in the cell inner membrane. Involved in succinate export with YjjP. Both proteins are required for export. The protein is Probable succinate transporter subunit YjjB of Yersinia enterocolitica serotype O:8 / biotype 1B (strain NCTC 13174 / 8081).